The chain runs to 682 residues: Potassium-transporting ATPase ATP-binding subunit (682 aa).

4 helical membrane-spanning segments follow: residues 34–54 (PVMF…IAMA), 62–82 (ALFS…ANFA), 219–239 (IALT…TATL), and 254–274 (VLVA…LSAI). The active-site 4-aspartylphosphate intermediate is the aspartate 307. Residues aspartate 344, glutamate 348, 377 to 384 (FTAQSRMS), and lysine 395 contribute to the ATP site. Mg(2+) contacts are provided by aspartate 518 and aspartate 522. 3 consecutive transmembrane segments (helical) span residues 588–608 (FAII…LNIM), 616–636 (AILS…PLAL), and 656–676 (IYGL…DLLL).

The protein belongs to the cation transport ATPase (P-type) (TC 3.A.3) family. Type IA subfamily. The system is composed of three essential subunits: KdpA, KdpB and KdpC.

The protein localises to the cell inner membrane. The catalysed reaction is K(+)(out) + ATP + H2O = K(+)(in) + ADP + phosphate + H(+). In terms of biological role, part of the high-affinity ATP-driven potassium transport (or Kdp) system, which catalyzes the hydrolysis of ATP coupled with the electrogenic transport of potassium into the cytoplasm. This subunit is responsible for energy coupling to the transport system and for the release of the potassium ions to the cytoplasm. The chain is Potassium-transporting ATPase ATP-binding subunit from Escherichia coli (strain UTI89 / UPEC).